Consider the following 147-residue polypeptide: Hemoglobin subunit gamma (147 aa).

Positions 3–147 (HFTAEEKAAI…VANALAYKYH (145 aa)) constitute a Globin domain. Positions 64 and 93 each coordinate heme b.

It belongs to the globin family. As to quaternary structure, heterotetramer of two alpha chains and two gamma chains in fetal hemoglobin (Hb F). In terms of tissue distribution, red blood cells.

Functionally, gamma chains make up the fetal hemoglobin F, in combination with alpha chains. The chain is Hemoglobin subunit gamma (HBG) from Elephas maximus (Indian elephant).